The primary structure comprises 87 residues: Small ribosomal subunit protein bS18B (87 aa).

It belongs to the bacterial ribosomal protein bS18 family. In terms of assembly, part of the 30S ribosomal subunit. Forms a tight heterodimer with protein bS6.

Its function is as follows. Binds as a heterodimer with protein bS6 to the central domain of the 16S rRNA, where it helps stabilize the platform of the 30S subunit. This Mycolicibacterium vanbaalenii (strain DSM 7251 / JCM 13017 / BCRC 16820 / KCTC 9966 / NRRL B-24157 / PYR-1) (Mycobacterium vanbaalenii) protein is Small ribosomal subunit protein bS18B.